The primary structure comprises 65 residues: Large ribosomal subunit protein bL33c (65 aa).

It belongs to the bacterial ribosomal protein bL33 family.

Its subcellular location is the plastid. It localises to the chloroplast. The sequence is that of Large ribosomal subunit protein bL33c from Zygnema circumcarinatum (Green alga).